Here is a 252-residue protein sequence, read N- to C-terminus: Small ribosomal subunit protein uS2 (252 aa).

This sequence belongs to the universal ribosomal protein uS2 family.

The chain is Small ribosomal subunit protein uS2 from Ruminiclostridium cellulolyticum (strain ATCC 35319 / DSM 5812 / JCM 6584 / H10) (Clostridium cellulolyticum).